We begin with the raw amino-acid sequence, 380 residues long: Glutamate 5-kinase (380 aa).

Position 20 (Lys20) interacts with ATP. Residues Ser59, Asp146, and Asn158 each coordinate substrate. An ATP-binding site is contributed by 220–226; that stretch reads TGGMYSK. One can recognise a PUA domain in the interval 285 to 363; that stretch reads SGTVTVDEGA…HEVAAILGDA (79 aa).

This sequence belongs to the glutamate 5-kinase family.

It is found in the cytoplasm. The enzyme catalyses L-glutamate + ATP = L-glutamyl 5-phosphate + ADP. Its pathway is amino-acid biosynthesis; L-proline biosynthesis; L-glutamate 5-semialdehyde from L-glutamate: step 1/2. Catalyzes the transfer of a phosphate group to glutamate to form L-glutamate 5-phosphate. The polypeptide is Glutamate 5-kinase (Nitratidesulfovibrio vulgaris (strain ATCC 29579 / DSM 644 / CCUG 34227 / NCIMB 8303 / VKM B-1760 / Hildenborough) (Desulfovibrio vulgaris)).